Reading from the N-terminus, the 579-residue chain is Isocitrate dehydrogenase kinase/phosphatase (579 aa).

Residues 324–330 (ADGTPGM) and lysine 345 each bind ATP. Aspartate 380 is an active-site residue.

Belongs to the AceK family.

The protein localises to the cytoplasm. It catalyses the reaction L-seryl-[isocitrate dehydrogenase] + ATP = O-phospho-L-seryl-[isocitrate dehydrogenase] + ADP + H(+). Bifunctional enzyme which can phosphorylate or dephosphorylate isocitrate dehydrogenase (IDH) on a specific serine residue. This is a regulatory mechanism which enables bacteria to bypass the Krebs cycle via the glyoxylate shunt in response to the source of carbon. When bacteria are grown on glucose, IDH is fully active and unphosphorylated, but when grown on acetate or ethanol, the activity of IDH declines drastically concomitant with its phosphorylation. In Xanthomonas euvesicatoria pv. vesicatoria (strain 85-10) (Xanthomonas campestris pv. vesicatoria), this protein is Isocitrate dehydrogenase kinase/phosphatase.